A 107-amino-acid chain; its full sequence is Circadian clock oscillator protein KaiB (107 aa).

This sequence belongs to the KaiB family. In terms of assembly, may undergo a major conformational rearrangment; in the free state forms homooligomers. When bound to KaiC switches to a monomeric thioredoxin-fold (KaiB(fs)). The active oscillator complex is probably KaiC(6):KaiB(6).

Component of the KaiBC clock protein complex, which constitutes the main circadian regulator in cyanobacteria; it may modify the ATPase activity of KaiC. In terms of biological role, may be a metamorphic protein which reversibly switches between an inactive tetrameric fold and a rare, thioredoxin-like monomeric fold (KaiB(fs)). KaiB(fs) binds phospho-KaiC, and perhaps clock output effectors. This is Circadian clock oscillator protein KaiB from Prochlorococcus marinus (strain NATL2A).